The following is a 248-amino-acid chain: 5'-nucleotidase SurE (248 aa).

Residues D8, D9, S39, and N91 each coordinate a divalent metal cation.

Belongs to the SurE nucleotidase family. The cofactor is a divalent metal cation.

The protein localises to the cytoplasm. The catalysed reaction is a ribonucleoside 5'-phosphate + H2O = a ribonucleoside + phosphate. Its function is as follows. Nucleotidase that shows phosphatase activity on nucleoside 5'-monophosphates. This is 5'-nucleotidase SurE from Marinomonas sp. (strain MWYL1).